The sequence spans 212 residues: Dephospho-CoA kinase (212 aa).

Residues 3-207 (IIGLTGGIAS…RHLADDPEPG (205 aa)) enclose the DPCK domain. 11 to 16 (ASGKST) contacts ATP.

The protein belongs to the CoaE family.

Its subcellular location is the cytoplasm. The catalysed reaction is 3'-dephospho-CoA + ATP = ADP + CoA + H(+). It functions in the pathway cofactor biosynthesis; coenzyme A biosynthesis; CoA from (R)-pantothenate: step 5/5. Functionally, catalyzes the phosphorylation of the 3'-hydroxyl group of dephosphocoenzyme A to form coenzyme A. The polypeptide is Dephospho-CoA kinase (Moorella thermoacetica (strain ATCC 39073 / JCM 9320)).